A 245-amino-acid polypeptide reads, in one-letter code: Probable octanoyltransferase 2 (245 aa).

A BPL/LPL catalytic domain is found at 38–227 (MEYKPVLYFQ…SIEKEFDIKE (190 aa)). Residues 89–96 (RGGYETYH), 157–159 (SIG), and 170–172 (GMA) contribute to the substrate site. The active-site Acyl-thioester intermediate is the C188.

This sequence belongs to the LipB family.

It is found in the cytoplasm. The enzyme catalyses octanoyl-[ACP] + L-lysyl-[protein] = N(6)-octanoyl-L-lysyl-[protein] + holo-[ACP] + H(+). The protein operates within protein modification; protein lipoylation via endogenous pathway; protein N(6)-(lipoyl)lysine from octanoyl-[acyl-carrier-protein]: step 1/2. Functionally, catalyzes the transfer of endogenously produced octanoic acid from octanoyl-acyl-carrier-protein onto the lipoyl domains of lipoate-dependent enzymes. Lipoyl-ACP can also act as a substrate although octanoyl-ACP is likely to be the physiological substrate. The sequence is that of Probable octanoyltransferase 2 from Picrophilus torridus (strain ATCC 700027 / DSM 9790 / JCM 10055 / NBRC 100828 / KAW 2/3).